Consider the following 262-residue polypeptide: Adenosylcobinamide-GDP ribazoletransferase (262 aa).

A run of 5 helical transmembrane segments spans residues 41–61, 65–85, 115–132, 134–156, and 195–215; these read AFPLAAILITLPAAAIAFILG, ASSLFSAFLVVAVQAMVTGAL, IGTYGAVALILSFGLRVS, LAAFLPLLTPTGGGIALLATAAL, and GVLLALVLFFLAGIPTVAVWL.

The protein belongs to the CobS family. It depends on Mg(2+) as a cofactor.

It is found in the cell inner membrane. It carries out the reaction alpha-ribazole + adenosylcob(III)inamide-GDP = adenosylcob(III)alamin + GMP + H(+). It catalyses the reaction alpha-ribazole 5'-phosphate + adenosylcob(III)inamide-GDP = adenosylcob(III)alamin 5'-phosphate + GMP + H(+). It participates in cofactor biosynthesis; adenosylcobalamin biosynthesis; adenosylcobalamin from cob(II)yrinate a,c-diamide: step 7/7. Joins adenosylcobinamide-GDP and alpha-ribazole to generate adenosylcobalamin (Ado-cobalamin). Also synthesizes adenosylcobalamin 5'-phosphate from adenosylcobinamide-GDP and alpha-ribazole 5'-phosphate. In Rhizobium meliloti (strain 1021) (Ensifer meliloti), this protein is Adenosylcobinamide-GDP ribazoletransferase.